The sequence spans 202 residues: Glycerol-3-phosphate acyltransferase (202 aa).

The next 6 helical transmembrane spans lie at 2–22 (MIVVMLILSYLIGAIPNGYVI), 54–74 (FIVTFLDIFKGFITVFFPIWF), 85–105 (FFTHGLIVGLFAILGHVYPIY), 120–140 (VVLGVNPILLLILAIIFFGVL), 141–161 (YIFKYVSLSSIIAAICCVIGS), and 162–182 (LIIQDYILFGMSLLVSIILIV).

It belongs to the PlsY family. In terms of assembly, probably interacts with PlsX.

Its subcellular location is the cell membrane. The catalysed reaction is an acyl phosphate + sn-glycerol 3-phosphate = a 1-acyl-sn-glycero-3-phosphate + phosphate. It participates in lipid metabolism; phospholipid metabolism. Catalyzes the transfer of an acyl group from acyl-phosphate (acyl-PO(4)) to glycerol-3-phosphate (G3P) to form lysophosphatidic acid (LPA). This enzyme utilizes acyl-phosphate as fatty acyl donor, but not acyl-CoA or acyl-ACP. The protein is Glycerol-3-phosphate acyltransferase of Staphylococcus haemolyticus (strain JCSC1435).